We begin with the raw amino-acid sequence, 351 residues long: Farnesyl pyrophosphate synthase (351 aa).

The isopentenyl diphosphate site is built by Lys51, Arg54, and Gln92. Residues Asp99 and Asp103 each contribute to the Mg(2+) site. Residue Arg108 participates in dimethylallyl diphosphate binding. Arg109 is a binding site for isopentenyl diphosphate. Dimethylallyl diphosphate contacts are provided by Lys196, Thr197, Gln236, Lys253, and Lys262.

Belongs to the FPP/GGPP synthase family. Mg(2+) serves as cofactor.

It catalyses the reaction isopentenyl diphosphate + dimethylallyl diphosphate = (2E)-geranyl diphosphate + diphosphate. The enzyme catalyses isopentenyl diphosphate + (2E)-geranyl diphosphate = (2E,6E)-farnesyl diphosphate + diphosphate. It functions in the pathway isoprenoid biosynthesis; farnesyl diphosphate biosynthesis; farnesyl diphosphate from geranyl diphosphate and isopentenyl diphosphate: step 1/1. Its pathway is isoprenoid biosynthesis; geranyl diphosphate biosynthesis; geranyl diphosphate from dimethylallyl diphosphate and isopentenyl diphosphate: step 1/1. In terms of biological role, farnesyl pyrophosphate synthase; part of the second module of ergosterol biosynthesis pathway that includes the middle steps of the pathway. ERG20 catalyzes the sequential condensation of isopentenyl pyrophosphate with dimethylallyl pyrophosphate, and then with the resultant geranylpyrophosphate to the ultimate product farnesyl pyrophosphate. The second module is carried out in the vacuole and involves the formation of farnesyl diphosphate, which is also an important intermediate in the biosynthesis of ubiquinone, dolichol, heme and prenylated proteins. Activity by the mevalonate kinase ERG12 first converts mevalonate into 5-phosphomevalonate. 5-phosphomevalonate is then further converted to 5-diphosphomevalonate by the phosphomevalonate kinase ERG8. The diphosphomevalonate decarboxylase MVD then produces isopentenyl diphosphate. The isopentenyl-diphosphate delta-isomerase IDI1 then catalyzes the 1,3-allylic rearrangement of the homoallylic substrate isopentenyl (IPP) to its highly electrophilic allylic isomer, dimethylallyl diphosphate (DMAPP). Finally the farnesyl diphosphate synthase ERG20 catalyzes the sequential condensation of isopentenyl pyrophosphate with dimethylallyl pyrophosphate, and then with the resultant geranylpyrophosphate to the ultimate product farnesyl pyrophosphate. The protein is Farnesyl pyrophosphate synthase of Candida albicans (strain SC5314 / ATCC MYA-2876) (Yeast).